Here is a 247-residue protein sequence, read N- to C-terminus: tRNA (guanine-N(1)-)-methyltransferase (247 aa).

Residues glycine 117 and 136-141 (LGDFVL) each bind S-adenosyl-L-methionine.

Belongs to the RNA methyltransferase TrmD family. In terms of assembly, homodimer.

It localises to the cytoplasm. The enzyme catalyses guanosine(37) in tRNA + S-adenosyl-L-methionine = N(1)-methylguanosine(37) in tRNA + S-adenosyl-L-homocysteine + H(+). Functionally, specifically methylates guanosine-37 in various tRNAs. This chain is tRNA (guanine-N(1)-)-methyltransferase, found in Myxococcus xanthus (strain DK1622).